The sequence spans 495 residues: Lanosterol 14-alpha demethylase erg11 (495 aa).

The chain crosses the membrane as a helical span at residues 2–22 (AFSLVSILLSIALAWYVGYII). Cysteine 442 provides a ligand contact to heme.

It belongs to the cytochrome P450 family. In terms of assembly, interacts with dap1. The cofactor is heme.

It is found in the endoplasmic reticulum. It localises to the membrane. The catalysed reaction is a 14alpha-methyl steroid + 3 reduced [NADPH--hemoprotein reductase] + 3 O2 = a Delta(14) steroid + formate + 3 oxidized [NADPH--hemoprotein reductase] + 4 H2O + 4 H(+). It catalyses the reaction a 14alpha-methyl steroid + reduced [NADPH--hemoprotein reductase] + O2 = a 14alpha-hydroxymethyl steroid + oxidized [NADPH--hemoprotein reductase] + H2O + H(+). It carries out the reaction a 14alpha-hydroxymethyl steroid + reduced [NADPH--hemoprotein reductase] + O2 = a 14alpha-formyl steroid + oxidized [NADPH--hemoprotein reductase] + 2 H2O + H(+). The enzyme catalyses a 14alpha-formyl steroid + reduced [NADPH--hemoprotein reductase] + O2 = a Delta(14) steroid + formate + oxidized [NADPH--hemoprotein reductase] + H2O + 2 H(+). The catalysed reaction is lanosterol + 3 reduced [NADPH--hemoprotein reductase] + 3 O2 = 4,4-dimethyl-5alpha-cholesta-8,14,24-trien-3beta-ol + formate + 3 oxidized [NADPH--hemoprotein reductase] + 4 H2O + 4 H(+). It catalyses the reaction lanosterol + reduced [NADPH--hemoprotein reductase] + O2 = 32-hydroxylanosterol + oxidized [NADPH--hemoprotein reductase] + H2O + H(+). It carries out the reaction 32-hydroxylanosterol + reduced [NADPH--hemoprotein reductase] + O2 = 32-oxolanosterol + oxidized [NADPH--hemoprotein reductase] + 2 H2O + H(+). The enzyme catalyses 32-oxolanosterol + reduced [NADPH--hemoprotein reductase] + O2 = 4,4-dimethyl-5alpha-cholesta-8,14,24-trien-3beta-ol + formate + oxidized [NADPH--hemoprotein reductase] + H2O + 2 H(+). The catalysed reaction is eburicol + 3 reduced [NADPH--hemoprotein reductase] + 3 O2 = 14-demethyleburicol + formate + 3 oxidized [NADPH--hemoprotein reductase] + 4 H2O + 4 H(+). It catalyses the reaction eburicol + reduced [NADPH--hemoprotein reductase] + O2 = 32-hydroxyeburicol + oxidized [NADPH--hemoprotein reductase] + H2O + H(+). It carries out the reaction 32-hydroxyeburicol + reduced [NADPH--hemoprotein reductase] + O2 = 32-oxoeburicol + oxidized [NADPH--hemoprotein reductase] + 2 H2O + H(+). The enzyme catalyses 32-oxoeburicol + reduced [NADPH--hemoprotein reductase] + O2 = 14-demethyleburicol + formate + oxidized [NADPH--hemoprotein reductase] + H2O + 2 H(+). It participates in steroid biosynthesis; zymosterol biosynthesis; zymosterol from lanosterol: step 1/6. Its pathway is steroid metabolism; ergosterol biosynthesis. Sterol 14alpha-demethylase that plays a critical role in the third module of ergosterol biosynthesis pathway, being ergosterol the major sterol component in fungal membranes that participates in a variety of functions. The third module or late pathway involves the ergosterol synthesis itself through consecutive reactions that mainly occur in the endoplasmic reticulum (ER) membrane. In filamentous fungi, during the initial step of this module, lanosterol (lanosta-8,24-dien-3beta-ol) can be metabolized to eburicol. Sterol 14alpha-demethylase catalyzes the three-step oxidative removal of the 14alpha-methyl group (C-32) of both these sterols in the form of formate, and converts eburicol and lanosterol to 14-demethyleburicol (4,4,24-trimethylergosta-8,14,24(28)-trienol) and 4,4-dimethyl-5alpha-cholesta-8,14,24-trien-3beta-ol, respectively, which are further metabolized by other enzymes in the pathway to ergosterol. Can also use substrates not intrinsic to fungi, such as 24,25-dihydrolanosterol (DHL), producing 4,4-dimethyl-8,14-cholestadien-3-beta-ol, but at lower rates than the endogenous substrates. The sequence is that of Lanosterol 14-alpha demethylase erg11 from Schizosaccharomyces pombe (strain 972 / ATCC 24843) (Fission yeast).